The sequence spans 320 residues: Endolytic peptidoglycan transglycosylase RlpA (320 aa).

The protein belongs to the RlpA family.

Its function is as follows. Lytic transglycosylase with a strong preference for naked glycan strands that lack stem peptides. The protein is Endolytic peptidoglycan transglycosylase RlpA of Rickettsia typhi (strain ATCC VR-144 / Wilmington).